Consider the following 193-residue polypeptide: Potassium-transporting ATPase KdpC subunit (193 aa).

A helical membrane pass occupies residues 14-34; it reads ITFTFLVLCGLVYPLIVTGIA.

It belongs to the KdpC family. As to quaternary structure, the system is composed of three essential subunits: KdpA, KdpB and KdpC.

It localises to the cell membrane. In terms of biological role, part of the high-affinity ATP-driven potassium transport (or Kdp) system, which catalyzes the hydrolysis of ATP coupled with the electrogenic transport of potassium into the cytoplasm. This subunit acts as a catalytic chaperone that increases the ATP-binding affinity of the ATP-hydrolyzing subunit KdpB by the formation of a transient KdpB/KdpC/ATP ternary complex. The polypeptide is Potassium-transporting ATPase KdpC subunit (Bacillus cereus (strain B4264)).